Consider the following 445-residue polypeptide: Probable histidine--tRNA ligase, cytoplasmic (445 aa).

This sequence belongs to the class-II aminoacyl-tRNA synthetase family.

The protein resides in the cytoplasm. The catalysed reaction is tRNA(His) + L-histidine + ATP = L-histidyl-tRNA(His) + AMP + diphosphate + H(+). This is Probable histidine--tRNA ligase, cytoplasmic from Antonospora locustae (Microsporidian parasite).